The sequence spans 448 residues: UDP-glycosyltransferase 79B5 (448 aa).

UDP-alpha-D-glucose is bound by residues T261, 320 to 322 (LEQ), 337 to 345 (HCGFGSMWE), and 359 to 362 (LADQ).

It belongs to the UDP-glycosyltransferase family.

In Arabidopsis thaliana (Mouse-ear cress), this protein is UDP-glycosyltransferase 79B5 (UGT79B5).